Consider the following 364-residue polypeptide: Spermidine/putrescine import ATP-binding protein PotA (364 aa).

In terms of domain architecture, ABC transporter spans 5 to 235 (LSLKSVSKSY…PVNRFVADFI (231 aa)). 37-44 (GPSGCGKT) is an ATP binding site.

This sequence belongs to the ABC transporter superfamily. Spermidine/putrescine importer (TC 3.A.1.11.1) family. In terms of assembly, the complex is composed of two ATP-binding proteins (PotA), two transmembrane proteins (PotB and PotC) and a solute-binding protein (PotD).

The protein resides in the cell membrane. It carries out the reaction ATP + H2O + polyamine-[polyamine-binding protein]Side 1 = ADP + phosphate + polyamineSide 2 + [polyamine-binding protein]Side 1.. In terms of biological role, part of the ABC transporter complex PotABCD involved in spermidine/putrescine import. Responsible for energy coupling to the transport system. This chain is Spermidine/putrescine import ATP-binding protein PotA, found in Staphylococcus aureus (strain USA300).